The chain runs to 205 residues: Adenylyl-sulfate kinase (205 aa).

31-38 is an ATP binding site; that stretch reads GLSGAGKS. Serine 105 (phosphoserine intermediate) is an active-site residue.

The protein belongs to the APS kinase family.

The catalysed reaction is adenosine 5'-phosphosulfate + ATP = 3'-phosphoadenylyl sulfate + ADP + H(+). It participates in sulfur metabolism; hydrogen sulfide biosynthesis; sulfite from sulfate: step 2/3. Its function is as follows. Catalyzes the synthesis of activated sulfate. The sequence is that of Adenylyl-sulfate kinase from Shewanella putrefaciens (strain CN-32 / ATCC BAA-453).